The following is a 387-amino-acid chain: Phosphoglycerate kinase (387 aa).

Residues 21 to 23, R36, 59 to 62, R113, and R146 contribute to the substrate site; these read DLN and HLGR. Residues K197, E314, and 340–343 contribute to the ATP site; that span reads GGDT.

Belongs to the phosphoglycerate kinase family. In terms of assembly, monomer.

Its subcellular location is the cytoplasm. The enzyme catalyses (2R)-3-phosphoglycerate + ATP = (2R)-3-phospho-glyceroyl phosphate + ADP. It participates in carbohydrate degradation; glycolysis; pyruvate from D-glyceraldehyde 3-phosphate: step 2/5. The sequence is that of Phosphoglycerate kinase (pgk) from Pasteurella multocida (strain Pm70).